Reading from the N-terminus, the 556-residue chain is Peptide chain release factor 3 (556 aa).

Positions 28–297 constitute a tr-type G domain; sequence QQRRNFAIIS…AFLDYALKPG (270 aa). Residues 37–44, 105–109, and 159–162 contribute to the GTP site; these read SHPDAGKT, DTPGH, and NKMD.

It belongs to the TRAFAC class translation factor GTPase superfamily. Classic translation factor GTPase family. PrfC subfamily.

The protein localises to the cytoplasm. Functionally, increases the formation of ribosomal termination complexes and stimulates activities of RF-1 and RF-2. It binds guanine nucleotides and has strong preference for UGA stop codons. It may interact directly with the ribosome. The stimulation of RF-1 and RF-2 is significantly reduced by GTP and GDP, but not by GMP. This chain is Peptide chain release factor 3, found in Synechococcus elongatus (strain ATCC 33912 / PCC 7942 / FACHB-805) (Anacystis nidulans R2).